Consider the following 133-residue polypeptide: Pheromone-regulated membrane protein 3 (133 aa).

The Nuclear portion of the chain corresponds to 1 to 104; it reads MTAMKEDNAA…SKVQRENKGS (104 aa). The segment at 36–100 is disordered; that stretch reads ADGFVINKAK…DASESKVQRE (65 aa). A Bipartite nuclear localization signal motif is present at residues 69 to 75; it reads GRVRKHK. Over residues 90 to 100 the composition is skewed to basic and acidic residues; the sequence is KDASESKVQRE. A helical transmembrane segment spans residues 105-127; the sequence is FYQGAIFGSFLGAAVTTVLSNLA. Topologically, residues 128 to 133 are perinuclear space; that stretch reads VKALQN.

As to quaternary structure, interacts with KAR5.

The protein resides in the nucleus outer membrane. Its subcellular location is the cytoplasm. It is found in the cytoskeleton. It localises to the microtubule organizing center. The protein localises to the spindle pole body. In terms of biological role, required for the fusion of nuclear envelopes during mating, ensuring proper karyogamy. Plays a role in the initiation of outer nuclear envelope fusion. This Saccharomyces cerevisiae (strain ATCC 204508 / S288c) (Baker's yeast) protein is Pheromone-regulated membrane protein 3 (PRM3).